We begin with the raw amino-acid sequence, 249 residues long: Large ribosomal subunit protein uL16m (249 aa).

This sequence belongs to the universal ribosomal protein uL16 family. In terms of assembly, component of the mitochondrial large ribosomal subunit (mt-LSU). Mature N.crassa 74S mitochondrial ribosomes consist of a small (37S) and a large (54S) subunit. The 37S small subunit contains a 16S ribosomal RNA (16S mt-rRNA) and 32 different proteins. The 54S large subunit contains a 23S rRNA (23S mt-rRNA) and 42 different proteins.

It is found in the mitochondrion. Functionally, component of the mitochondrial ribosome (mitoribosome), a dedicated translation machinery responsible for the synthesis of mitochondrial genome-encoded proteins, including at least some of the essential transmembrane subunits of the mitochondrial respiratory chain. The mitoribosomes are attached to the mitochondrial inner membrane and translation products are cotranslationally integrated into the membrane. The protein is Large ribosomal subunit protein uL16m (mrpl16) of Neurospora crassa (strain ATCC 24698 / 74-OR23-1A / CBS 708.71 / DSM 1257 / FGSC 987).